Consider the following 740-residue polypeptide: F-BAR and double SH3 domains protein 2 (740 aa).

Positions 8 to 282 (VKVTQELKNI…NSSKVVRDYN (275 aa)) constitute an F-BAR domain. A disordered region spans residues 303 to 323 (PCDSDTSRQLESETGTTEEHS). Residues 307–323 (DTSRQLESETGTTEEHS) show a composition bias toward basic and acidic residues. The stretch at 356–397 (GAAVSEQSRAELEQKIDEARENIRKAEIIKLKAEARLDLLKQ) forms a coiled coil. 2 SH3 domains span residues 469–530 (NYPL…FPTS) and 567–629 (ASVC…ELSA). The interval 567–629 (ASVCFVKALY…PSVLVEELSA (63 aa)) is required and sufficient for location at clathrin-coated pits. A disordered region spans residues 633–740 (GDTPWMREIQ…KIEDVEITLV (108 aa)). Over residues 646 to 657 (SPKPHASLPPLP) the composition is skewed to pro residues. Residues Ser675 and Ser681 each carry the phosphoserine modification.

In terms of assembly, homodimer. Interacts (via SH3 domain 2) with ITSN1 (via SH3 domain 4). Recruited to clathrin-coated pits during a mid-to-late stage of assembly via interaction with ITSN1. Interacts (via SH3 domain 1) with WASL. Interacts with WAS. Interacts with CASK and MAGI1. CASK inhibits interaction with MAGI1. Phosphorylated. Phosphorylation on a Ser residue is important for recruitment to the cell membrane and for its role in promoting endocytosis. In terms of tissue distribution, liver, brain, heart, placenta, skeletal muscle, pancreas, lung and kidney.

It localises to the cytoplasm. Its subcellular location is the cell junction. The protein resides in the membrane. It is found in the clathrin-coated pit. The protein localises to the cell membrane. It localises to the cell projection. Its subcellular location is the stereocilium. Its function is as follows. Adapter protein that plays a role in endocytosis via clathrin-coated pits. Contributes to the internalization of cell surface receptors, such as integrin ITGB1 and transferrin receptor. Promotes endocytosis of EGFR in cancer cells, and thereby contributes to the down-regulation of EGFR signaling. Recruited to clathrin-coated pits during a mid-to-late stage of assembly, where it is required for normal progress from U-shaped intermediate stage pits to terminal, omega-shaped pits. Binds to membranes enriched in phosphatidylinositol 3,4-bisphosphate or phosphatidylinositol 3,4,5-trisphosphate. When bound to membranes, promotes actin polymerization via its interaction with WAS and/or WASL which leads to the activation of the Arp2/3 complex. Does not promote actin polymerisation in the absence of membranes. This Homo sapiens (Human) protein is F-BAR and double SH3 domains protein 2 (FCHSD2).